The chain runs to 333 residues: MIDTTLPLTDIHRHLDGNIRPQTILELGRRYNISLPAQSLETLIPHVQVIANEPDLVSFLTKLDWGVKVLASLDACRRVAFENIEDAARNGLHYVELRFSPGYMAMAHQLPVAGVVEAVIDGVREGCRTFGVQAKLIGIMSRTFGEAACQQELEAFLAHRDQITALDLAGDELGFPGSLFLSHFNRARDADWHITVHAGEAAGPESIWQAIRELGAERIGHGVKAIEDRALMDFLAEQQIGIESCLTSNIQTSTVAELAAHPLKMFLEHGIRASINTDDPGVQGVDIIHEYTVAAPAAGLSREQIRQAQINGLEMAFLSAEEKRALREKVAAK.

Zn(2+)-binding residues include H12 and H14. Residues H14, D16, and G170 each coordinate substrate. H197 is a Zn(2+) binding site. Catalysis depends on E200, which acts as the Proton donor. D278 contacts Zn(2+). D279 is a binding site for substrate.

The protein belongs to the metallo-dependent hydrolases superfamily. Adenosine and AMP deaminases family. Adenosine deaminase subfamily. Requires Zn(2+) as cofactor.

It catalyses the reaction adenosine + H2O + H(+) = inosine + NH4(+). The catalysed reaction is 2'-deoxyadenosine + H2O + H(+) = 2'-deoxyinosine + NH4(+). In terms of biological role, catalyzes the hydrolytic deamination of adenosine and 2-deoxyadenosine. The chain is Adenosine deaminase from Escherichia coli (strain SMS-3-5 / SECEC).